Reading from the N-terminus, the 132-residue chain is Large ribosomal subunit protein uL22 (132 aa).

It belongs to the universal ribosomal protein uL22 family. In terms of assembly, part of the 50S ribosomal subunit.

This protein binds specifically to 23S rRNA; its binding is stimulated by other ribosomal proteins, e.g. L4, L17, and L20. It is important during the early stages of 50S assembly. It makes multiple contacts with different domains of the 23S rRNA in the assembled 50S subunit and ribosome. In terms of biological role, the globular domain of the protein is located near the polypeptide exit tunnel on the outside of the subunit, while an extended beta-hairpin is found that lines the wall of the exit tunnel in the center of the 70S ribosome. In Pelagibacter ubique (strain HTCC1062), this protein is Large ribosomal subunit protein uL22.